Reading from the N-terminus, the 533-residue chain is Acetone monooxygenase (methyl acetate-forming) (533 aa).

FAD is bound by residues 43 to 46 (TWYW), 55 to 56 (DS), and Tyr61. 53 to 55 (RFD) provides a ligand contact to NADP(+). Residues 183–189 (NGATGIQ), 206–207 (RT), and Trp492 contribute to the NADP(+) site.

Belongs to the FAD-binding monooxygenase family. Homotetramer. FAD is required as a cofactor.

The catalysed reaction is acetone + NADPH + O2 + H(+) = methyl acetate + NADP(+) + H2O. Functionally, plays an important role in the metabolism of acetone derived from propane oxidation. Catalyzes the oxidation of acetone to methyl acetate. Exhibits high catalytic efficiency towards various linear and cyclic ketones, such as butanone, 2-pentanone, 2-heptanone, 2-octanone, 2-nonanone, 2-decanone, cyclobutanone, cyclopentanone and cyclohexanone. Elicits the highest catalytic efficiency towards butanone and cyclobutanone. Is highly specific for NADPH and cannot use NADH. This Gordonia sp. (strain TY-5) protein is Acetone monooxygenase (methyl acetate-forming).